The chain runs to 364 residues: MKRINVLHFGAGNIGRGVILPIYQQNDFSIDLVELNQNTVNELQKQKQYQVHYLDCDQSQLVNDFNTWNLKDEAKIIELMERADVISTSIGAKNLASLKTLFDKAKFHKRAIVLCFENGFRISSNFKNILQLNNTQVNFVDVVIDTIAPNFEKKANFLDIYCEKYSEIYAETFPLEIKGVNQKNSLDRFIIKKLLLVNALHSVIGLLGFQQKLKYVHETLQVKSNLTFVEKLAQQIIDALCAEYPEFNKNNLLSYGKNNLVRFANPKIQDLNTRLIREPLRKLNQNERFYAIYKLFKKNKIALNNILQVYLMVLKTNITDDTESQQIAKLINEKAWTELAKLSSLEESEWNLIKQELSREITKK.

6–17 (VLHFGAGNIGRG) provides a ligand contact to NAD(+).

The protein belongs to the mannitol dehydrogenase family.

It catalyses the reaction D-mannitol 1-phosphate + NAD(+) = beta-D-fructose 6-phosphate + NADH + H(+). The chain is Mannitol-1-phosphate 5-dehydrogenase (mtlD) from Mycoplasma pneumoniae (strain ATCC 29342 / M129 / Subtype 1) (Mycoplasmoides pneumoniae).